A 94-amino-acid chain; its full sequence is Neutrophil defensin 1 (94 aa).

Positions 1–19 are cleaved as a signal peptide; that stretch reads MRTLAILAAILLVALQAQA. Positions 20-38 are excised as a propeptide; it reads EPLQARADEVAAAPEQIAA. Cystine bridges form between cysteine 66–cysteine 94, cysteine 68–cysteine 83, and cysteine 73–cysteine 93. Arginine 78 carries the post-translational modification ADP-ribosylarginine; by ART1. Tyrosine 85 is modified (phosphotyrosine). Arginine 88 carries the ADP-ribosylarginine; by ART1 modification.

It belongs to the alpha-defensin family. In terms of assembly, tetramer. Dimer. Interacts with RETN. (Microbial infection) Interacts with HIV-1 surface protein gp120. As to quaternary structure, (Microbial infection) Interacts with herpes virus 1 (HHV1) envelope glycoprotein B; this interaction inhibits viral infection. Post-translationally, ADP-ribosylation drastically reduces cytotoxic and antibacterial activities, and enhances IL8 production. Phosphorylation at Tyr-85 has been found in some cancer cell lines, and interferes with ADP-ribosylation.

The protein localises to the secreted. Functionally, effector molecule of the innate immune system that acts via antibiotic-like properties against a broad array of infectious agents including bacteria, fungi, and viruses or by promoting the activation and maturation of some APCs. Interacts with the essential precursor of cell wall synthesis lipid II to inhibit bacterial cell wall synthesis. Inhibits adenovirus infection via inhibition of viral disassembly at the vertex region, thereby restricting the release of internal capsid protein pVI, which is required for endosomal membrane penetration during cell entry. In addition, interaction with adenovirus capsid leads to the redirection of viral particles to TLR4 thereby promoting a NLRP3-mediated inflammasome response and interleukin 1-beta (IL-1beta) release. Induces the production of proinflammatory cytokines including type I interferon (IFN) in plasmacytoid dendritic cells (pDCs) by triggering the degradation of NFKBIA and nuclear translocation of IRF1, both of which are required for activation of pDCs. The protein is Neutrophil defensin 1 (DEFA1) of Homo sapiens (Human).